A 168-amino-acid chain; its full sequence is Photosystem I assembly protein Ycf3 (168 aa).

TPR repeat units follow at residues 35–68 (AFTYYRDGMSAQSEGNYAEALQNYYEAMRLEIDP), 72–105 (SYILYNIGLIHTSNGEHTKALEYYFRALERNPFL), and 120–153 (GEQAIRQGDSEIAEAWFDQAAEYWKQAMALTPGN).

Belongs to the Ycf3 family.

The protein resides in the plastid. Its subcellular location is the chloroplast thylakoid membrane. Essential for the assembly of the photosystem I (PSI) complex. May act as a chaperone-like factor to guide the assembly of the PSI subunits. The chain is Photosystem I assembly protein Ycf3 from Panax ginseng (Korean ginseng).